The following is a 31-amino-acid chain: Photosystem II reaction center protein T (31 aa).

A helical membrane pass occupies residues 3 to 23 (SFAYVLILTLAIATLFFAIAF).

Belongs to the PsbT family. As to quaternary structure, PSII is composed of 1 copy each of membrane proteins PsbA, PsbB, PsbC, PsbD, PsbE, PsbF, PsbH, PsbI, PsbJ, PsbK, PsbL, PsbM, PsbT, PsbX, PsbY, PsbZ, Psb30/Ycf12, peripheral proteins PsbO, CyanoQ (PsbQ), PsbU, PsbV and a large number of cofactors. It forms dimeric complexes.

It localises to the cellular thylakoid membrane. Its function is as follows. Found at the monomer-monomer interface of the photosystem II (PS II) dimer, plays a role in assembly and dimerization of PSII. PSII is a light-driven water plastoquinone oxidoreductase, using light energy to abstract electrons from H(2)O, generating a proton gradient subsequently used for ATP formation. The sequence is that of Photosystem II reaction center protein T from Parasynechococcus marenigrum (strain WH8102).